A 290-amino-acid chain; its full sequence is 4-hydroxy-tetrahydrodipicolinate synthase (290 aa).

Residue Thr-44 coordinates pyruvate. The active-site Proton donor/acceptor is Tyr-132. The Schiff-base intermediate with substrate role is filled by Lys-160. Ile-202 is a binding site for pyruvate.

The protein belongs to the DapA family. As to quaternary structure, homotetramer; dimer of dimers.

The protein resides in the cytoplasm. It catalyses the reaction L-aspartate 4-semialdehyde + pyruvate = (2S,4S)-4-hydroxy-2,3,4,5-tetrahydrodipicolinate + H2O + H(+). The protein operates within amino-acid biosynthesis; L-lysine biosynthesis via DAP pathway; (S)-tetrahydrodipicolinate from L-aspartate: step 3/4. Its function is as follows. Catalyzes the condensation of (S)-aspartate-beta-semialdehyde [(S)-ASA] and pyruvate to 4-hydroxy-tetrahydrodipicolinate (HTPA). The sequence is that of 4-hydroxy-tetrahydrodipicolinate synthase from Geotalea daltonii (strain DSM 22248 / JCM 15807 / FRC-32) (Geobacter daltonii).